The following is a 180-amino-acid chain: MEYKCCSDKYIWSAHDSYFYKGLSELILDIDELIYLSQEKIRKDFVFINLNTASLNEFIRRDSEWLSAVKGKQVVLIAARKSEALANYWYYNSNIRGVVYVGLSRDIRKELAYVINGRFLRKDIKKDKITDREMKIIRMTAQGMQPKSIARIENCSVKTVYTHRRNAEAKLYSKIYKLVQ.

Positions 122 to 180 (KDIKKDKITDREMKIIRMTAQGMQPKSIARIENCSVKTVYTHRRNAEAKLYSKIYKLVQ) constitute an HTH luxR-type domain. The segment at residues 146-165 (PKSIARIENCSVKTVYTHRR) is a DNA-binding region (H-T-H motif).

Belongs to the EcpR/MatA family.

Its subcellular location is the cytoplasm. In terms of biological role, part of the ecpRABCDE operon, which encodes the E.coli common pilus (ECP). ECP plays a dual role in early-stage biofilm development and host cell recognition. Positively regulates the expression of the ecp operon. The polypeptide is HTH-type transcriptional regulator EcpR (ecpR) (Klebsiella pneumoniae (strain 342)).